Consider the following 408-residue polypeptide: Aminoacylase-1B (408 aa).

Residue histidine 80 participates in Zn(2+) binding. Aspartate 82 is a catalytic residue. A Zn(2+)-binding site is contributed by aspartate 113. The active-site Proton acceptor is glutamate 147. Residues glutamate 148, glutamate 175, and histidine 373 each contribute to the Zn(2+) site. Serine 408 is subject to Phosphoserine.

The protein belongs to the peptidase M20A family. Homodimer. It depends on Zn(2+) as a cofactor. Expressed in kidney.

Its subcellular location is the cytoplasm. The enzyme catalyses an N-acyl-L-amino acid + H2O = an L-alpha-amino acid + a carboxylate. The catalysed reaction is an N-acetyl-L-cysteine-S-conjugate + H2O = an S-substituted L-cysteine + acetate. In terms of biological role, involved in the hydrolysis of N-acylated or N-acetylated amino acids (except L-aspartate). This Rattus norvegicus (Rat) protein is Aminoacylase-1B (Acy1b).